The primary structure comprises 994 residues: ASI1-immunoprecipitated protein 2 (994 aa).

Disordered regions lie at residues 39 to 182 (AEFS…SGEN) and 187 to 206 (KADESNTSAMSDSESENDPE). Over residues 45–54 (KSDESSDENS) the composition is skewed to basic and acidic residues. Positions 60 to 102 (SQCSFNGDNLLRSSGVNAPGSSHNTSSEASHLVNSNHDTSSEN) are enriched in polar residues. Basic and acidic residues-rich tracts occupy residues 119 to 140 (LLDRPHKDQDSMKVDSCNDHQA) and 148 to 163 (KVKEKSGAKNNEEKKN). The segment at 212–263 (VKVCDTCGDAGREDLLAICSRCSDGAEHTYCMRVMLKKVPKGYWLCEECKFA) adopts a PHD-type zinc-finger fold. 8 residues coordinate Zn(2+): Cys-215, Cys-218, Cys-230, Cys-233, His-239, Cys-242, Cys-257, and Cys-260. Disordered regions lie at residues 342–567 (AHYS…NNKG) and 839–875 (CSNPPKNTPLPASCVSPNRDTFRHENPSNKKSLTDRT). Residues 371–384 (SFLKSNSFNSLSSR) are compositionally biased toward low complexity. Composition is skewed to polar residues over residues 417-435 (VGKSMSSRCIDVGSSNCND) and 449-464 (TEANPSASISRGNSSI). Basic and acidic residues-rich tracts occupy residues 469–478 (SPRDLKDLQS), 536–552 (PRSREFREAGEKTKDAV), and 858–875 (DTFRHENPSNKKSLTDRT).

Component of the ASI1-AIPP1-EDM2 (AAE) RNA regulatory complex composed of at least AIPP1/EDM3, ASI1 and EDM2 and may contain CPL2, AIPP2 and AIPP3/BDT1. Part of the BAH-PHD bivalent histone reader complex that contains AIPP2, PAIPP2 and AIPP3/BDT1; the BAH-PHD module associates with CPL2 to form the BAH-PHD-CPL2 complex (BPC) for transcriptional repression. Binds directly to ASI1, AIPP3/BDT1 and CPL2 but not to PAIPP2. As to expression, expressed ubiquitously.

Together with AIPP3/BDT1 and PAIPP2, cooperates to form a BAH-PHD bivalent histone reader complex able to read histone H3 lysine 27 trimethylation (H3K27me3) and low-methylated H3K4 histone marks in order to regulate transcription, especially to prevent early flowering; promotes AIPP3/BDT1 binding to H3K27me3. CPL2 is subsequently recruited to form a BAH-PHD-CPL2 complex (BPC) in order to silence several H3K27me3 and low-methylated H3K4 enriched loci, including AGO5, via the phosphorylation state-dependent inhibition of Pol II release from the transcriptional start site (e.g. Ser5P-Pol II dephosphorylation). The BPC complex represses flowering by inhibiting the expression of several genes, including AGL6, FT, FUL and SOC1. Prevents the accumulation of intronic heterochromatin-containing genes (e.g. IBM1, At3g05410 and RPP7). The protein is ASI1-immunoprecipitated protein 2 of Arabidopsis thaliana (Mouse-ear cress).